Here is a 95-residue protein sequence, read N- to C-terminus: Aspartyl/glutamyl-tRNA(Asn/Gln) amidotransferase subunit C (95 aa).

Positions 51 to 95 are disordered; it reads PTSHATLTSSRLREDVTRPSLPPEKSLANAPAKSDTSFAVPKIIE.

It belongs to the GatC family. Heterotrimer of A, B and C subunits.

The enzyme catalyses L-glutamyl-tRNA(Gln) + L-glutamine + ATP + H2O = L-glutaminyl-tRNA(Gln) + L-glutamate + ADP + phosphate + H(+). It carries out the reaction L-aspartyl-tRNA(Asn) + L-glutamine + ATP + H2O = L-asparaginyl-tRNA(Asn) + L-glutamate + ADP + phosphate + 2 H(+). Allows the formation of correctly charged Asn-tRNA(Asn) or Gln-tRNA(Gln) through the transamidation of misacylated Asp-tRNA(Asn) or Glu-tRNA(Gln) in organisms which lack either or both of asparaginyl-tRNA or glutaminyl-tRNA synthetases. The reaction takes place in the presence of glutamine and ATP through an activated phospho-Asp-tRNA(Asn) or phospho-Glu-tRNA(Gln). This chain is Aspartyl/glutamyl-tRNA(Asn/Gln) amidotransferase subunit C, found in Myxococcus xanthus (strain DK1622).